A 74-amino-acid polypeptide reads, in one-letter code: uncharacterized protein (74 aa).

This is an uncharacterized protein from Acidianus hospitalis (AFV-1).